Consider the following 228-residue polypeptide: Probable methylthioribulose-1-phosphate dehydratase (228 aa).

Cysteine 87 contacts substrate. Zn(2+) is bound by residues histidine 105 and histidine 107. Glutamate 129 serves as the catalytic Proton donor/acceptor. Residue histidine 185 coordinates Zn(2+).

The protein belongs to the aldolase class II family. MtnB subfamily. The cofactor is Zn(2+).

It is found in the cytoplasm. It catalyses the reaction 5-(methylsulfanyl)-D-ribulose 1-phosphate = 5-methylsulfanyl-2,3-dioxopentyl phosphate + H2O. It participates in amino-acid biosynthesis; L-methionine biosynthesis via salvage pathway; L-methionine from S-methyl-5-thio-alpha-D-ribose 1-phosphate: step 2/6. Its function is as follows. Catalyzes the dehydration of methylthioribulose-1-phosphate (MTRu-1-P) into 2,3-diketo-5-methylthiopentyl-1-phosphate (DK-MTP-1-P). The chain is Probable methylthioribulose-1-phosphate dehydratase from Drosophila willistoni (Fruit fly).